Consider the following 294-residue polypeptide: Peroxidase-like protein 3 (294 aa).

N-linked (GlcNAc...) asparagine glycosylation is present at N129.

Belongs to the peroxidase family. In terms of tissue distribution, component of the acid-insoluble and acid-soluble organic matrix of calcified layers of the shell (at protein level).

Its subcellular location is the secreted. This chain is Peroxidase-like protein 3, found in Lottia gigantea (Giant owl limpet).